A 527-amino-acid polypeptide reads, in one-letter code: MQKRNRRDVVPHPSIETGPMIKHALSVTRQADFAAWYQDVIAEADLAEESGVRGCMVIKPWGYGIWERIQTVMDAAIKDAGVQNAYFPLFIPLSFFEKEADHVDGFAKEMAVVTHHRLIADSKGKLVPDPEAKLEEPLIVRPTSETVIGAAMSRWVQSWRDLPLKVNQWANVVRWEMRTRMFLRTSEFLWQEGHTAHADRDDAMAETLRALEMYRSFAEDVLAMPVIAGEKPENERFPGAVATYSIEAMMQDGKALQAGTSHYLGTGFAEAAGIRYQDRDGGHSLCHTTSWGTSTRMIGGVIMTHGDDDGLRCPPRIAPHQIVIVPMLRDNGEDAAILDYCRDLESRLKALDAFGEPVRVLLDTGANKAQTKRWGWVKKGAPIIVEVGPRDVAGGNVAVIRRDRLYQESGKLNSAFVAKGDFIADAAATLEDIQASLYAEARERLDANIRRDVTDLAAHFSGEDRFVGWAEVQWARPTGGALDRIVEQLKALKLTMRNTPLDAAPADSACIFTGEPAVERVLIGRTY.

Belongs to the class-II aminoacyl-tRNA synthetase family. ProS type 3 subfamily. Homodimer.

It localises to the cytoplasm. It carries out the reaction tRNA(Pro) + L-proline + ATP = L-prolyl-tRNA(Pro) + AMP + diphosphate. Functionally, catalyzes the attachment of proline to tRNA(Pro) in a two-step reaction: proline is first activated by ATP to form Pro-AMP and then transferred to the acceptor end of tRNA(Pro). The polypeptide is Proline--tRNA ligase (Sphingopyxis alaskensis (strain DSM 13593 / LMG 18877 / RB2256) (Sphingomonas alaskensis)).